Here is a 1005-residue protein sequence, read N- to C-terminus: Translation initiation factor IF-2 (1005 aa).

Disordered regions lie at residues 54 to 337 (KYVP…RRPQ) and 368 to 414 (PKPK…PTSV). Polar residues predominate over residues 58-73 (SPSTHSMPPTRPTSHS). The span at 75–86 (PLPPQPGKPQPK) shows a compositional bias: pro residues. Positions 146 to 157 (GSNSPSHSESTP) are enriched in polar residues. Composition is skewed to low complexity over residues 189–198 (PSPAAMAGRA) and 222–240 (VESAPVATATPAPASPRAE). The span at 258 to 274 (PRSETSEDGARRGEKLV) shows a compositional bias: basic and acidic residues. Positions 392–401 (GGRKLSRRDR) are enriched in basic residues. The 174-residue stretch at 495–668 (RRPPVVTIMG…LLVSEVEDLY (174 aa)) folds into the tr-type G domain. Residues 504-511 (GHVDHGKT) are G1. 504–511 (GHVDHGKT) contributes to the GTP binding site. Positions 529–533 (GITQH) are G2. A G3 region spans residues 554–557 (DTPG). GTP contacts are provided by residues 554–558 (DTPGH) and 608–611 (NKID). The G4 stretch occupies residues 608–611 (NKID). A G5 region spans residues 644 to 646 (SAI).

It belongs to the TRAFAC class translation factor GTPase superfamily. Classic translation factor GTPase family. IF-2 subfamily.

The protein resides in the cytoplasm. One of the essential components for the initiation of protein synthesis. Protects formylmethionyl-tRNA from spontaneous hydrolysis and promotes its binding to the 30S ribosomal subunits. Also involved in the hydrolysis of GTP during the formation of the 70S ribosomal complex. The protein is Translation initiation factor IF-2 of Cyanothece sp. (strain PCC 7425 / ATCC 29141).